A 145-amino-acid polypeptide reads, in one-letter code: Large ribosomal subunit protein uL13 (145 aa).

The protein belongs to the universal ribosomal protein uL13 family. As to quaternary structure, part of the 50S ribosomal subunit.

This protein is one of the early assembly proteins of the 50S ribosomal subunit, although it is not seen to bind rRNA by itself. It is important during the early stages of 50S assembly. This is Large ribosomal subunit protein uL13 from Listeria monocytogenes serotype 4b (strain CLIP80459).